The following is a 63-amino-acid chain: Large ribosomal subunit protein bL32c (63 aa).

Residues 38 to 63 (RSFSGVSEHPKPKGFSRQQTNNRVLG) are disordered. Residues 53-63 (SRQQTNNRVLG) are compositionally biased toward polar residues.

This sequence belongs to the bacterial ribosomal protein bL32 family.

It localises to the plastid. Its subcellular location is the chloroplast. This is Large ribosomal subunit protein bL32c (rpl32) from Oryza sativa (Rice).